Consider the following 518-residue polypeptide: Apolipoprotein N-acyltransferase (518 aa).

The next 6 helical transmembrane spans lie at 22–42 (LAFI…LWII), 63–83 (FFHW…WVHV), 101–121 (ALLA…LAWF), 134–154 (LLFP…LTGF), 174–194 (IIGA…LALC), and 202–222 (LLIL…LSQI). The 251-residue stretch at 234–484 (VQGNIPQSMK…TGVLSATIPL (251 aa)) folds into the CN hydrolase domain. The active-site Proton acceptor is the glutamate 273. Lysine 343 is a catalytic residue. Cysteine 395 acts as the Nucleophile in catalysis. Residues 492-512 (AKIGQTPLLILCGALLLVGFI) form a helical membrane-spanning segment.

The protein belongs to the CN hydrolase family. Apolipoprotein N-acyltransferase subfamily.

Its subcellular location is the cell inner membrane. The enzyme catalyses N-terminal S-1,2-diacyl-sn-glyceryl-L-cysteinyl-[lipoprotein] + a glycerophospholipid = N-acyl-S-1,2-diacyl-sn-glyceryl-L-cysteinyl-[lipoprotein] + a 2-acyl-sn-glycero-3-phospholipid + H(+). It functions in the pathway protein modification; lipoprotein biosynthesis (N-acyl transfer). Catalyzes the phospholipid dependent N-acylation of the N-terminal cysteine of apolipoprotein, the last step in lipoprotein maturation. This chain is Apolipoprotein N-acyltransferase, found in Shewanella oneidensis (strain ATCC 700550 / JCM 31522 / CIP 106686 / LMG 19005 / NCIMB 14063 / MR-1).